The sequence spans 461 residues: MLKIFNTLTRQKEEFKPIHAGEVGMYVCGITVYDLCHIGHGRTFVAFDVVARYLRFLGYKLKYVRNITDIDDKIIKRANENGESFVAMVDRMIAEMHKDFDALNILRPDMEPRATHHIAEIIELTEQLIAKGHAYVADNGDVMFDVPTDPTYGVLSRQDLDQLQAGARVDVVDDKRNPMDFVLWKMSKEGEPSWPSPWGAGRPGWHIECSAMNCKQLGNHFDIHGGGSDLMFPHHENEIAQSTCAHDGQYVNYWMHSGMVMVDREKMSKSLGNFFTVRDVLKYYDAETVRYFLMSGHYRSQLNYSEENLKQARAALERLYTALRGTDKTVAPAGGEAFEARFIEAMDDDFNTPEAYSVLFDMAREVNRLKAEDMAAANAMASHLRKLSAVLGLLEQEPEAFLQSGAQADDSEVAEIEALIQQRLDARKAKDWAAADAARDRLNEMGIVLEDGPQGTTWRRK.

Cys28 provides a ligand contact to Zn(2+). The 'HIGH' region motif lies at 30-40 (ITVYDLCHIGH). Positions 209, 234, and 238 each coordinate Zn(2+). The 'KMSKS' region motif lies at 266–270 (KMSKS). Lys269 contacts ATP.

The protein belongs to the class-I aminoacyl-tRNA synthetase family. As to quaternary structure, monomer. The cofactor is Zn(2+).

The protein localises to the cytoplasm. It carries out the reaction tRNA(Cys) + L-cysteine + ATP = L-cysteinyl-tRNA(Cys) + AMP + diphosphate. In Escherichia coli (strain K12 / MC4100 / BW2952), this protein is Cysteine--tRNA ligase.